The sequence spans 291 residues: ATP synthase gamma chain (291 aa).

The protein belongs to the ATPase gamma chain family. In terms of assembly, F-type ATPases have 2 components, CF(1) - the catalytic core - and CF(0) - the membrane proton channel. CF(1) has five subunits: alpha(3), beta(3), gamma(1), delta(1), epsilon(1). CF(0) has three main subunits: a, b and c.

Its subcellular location is the cell inner membrane. In terms of biological role, produces ATP from ADP in the presence of a proton gradient across the membrane. The gamma chain is believed to be important in regulating ATPase activity and the flow of protons through the CF(0) complex. This is ATP synthase gamma chain from Neisseria gonorrhoeae (strain ATCC 700825 / FA 1090).